We begin with the raw amino-acid sequence, 145 residues long: D-aminoacyl-tRNA deacylase (145 aa).

A Gly-cisPro motif, important for rejection of L-amino acids motif is present at residues 137–138 (GP).

This sequence belongs to the DTD family. As to quaternary structure, homodimer.

Its subcellular location is the cytoplasm. It carries out the reaction glycyl-tRNA(Ala) + H2O = tRNA(Ala) + glycine + H(+). It catalyses the reaction a D-aminoacyl-tRNA + H2O = a tRNA + a D-alpha-amino acid + H(+). Its function is as follows. An aminoacyl-tRNA editing enzyme that deacylates mischarged D-aminoacyl-tRNAs. Also deacylates mischarged glycyl-tRNA(Ala), protecting cells against glycine mischarging by AlaRS. Acts via tRNA-based rather than protein-based catalysis; rejects L-amino acids rather than detecting D-amino acids in the active site. By recycling D-aminoacyl-tRNA to D-amino acids and free tRNA molecules, this enzyme counteracts the toxicity associated with the formation of D-aminoacyl-tRNA entities in vivo and helps enforce protein L-homochirality. The chain is D-aminoacyl-tRNA deacylase from Pseudomonas putida (strain W619).